Consider the following 314-residue polypeptide: Large ribosomal subunit protein uL10 (314 aa).

Residues 281–314 are disordered; the sequence is GSTQETPEEKKEEAKKEEKSPDESISEGLGALFQ. Residues 287–302 show a composition bias toward basic and acidic residues; sequence PEEKKEEAKKEEKSPD.

It belongs to the universal ribosomal protein uL10 family. Part of the 50S ribosomal subunit. Forms part of the ribosomal stalk which helps the ribosome interact with GTP-bound translation factors. Forms a heptameric L10(L12)2(L12)2(L12)2 complex, where L10 forms an elongated spine to which the L12 dimers bind in a sequential fashion.

Forms part of the ribosomal stalk, playing a central role in the interaction of the ribosome with GTP-bound translation factors. The polypeptide is Large ribosomal subunit protein uL10 (Thermoplasma acidophilum (strain ATCC 25905 / DSM 1728 / JCM 9062 / NBRC 15155 / AMRC-C165)).